Here is a 108-residue protein sequence, read N- to C-terminus: Translation initiation factor 1A (108 aa).

Residues 10 to 84 form the S1-like domain; the sequence is IRVITPNKKS…EKGDIIYRYT (75 aa).

Belongs to the eIF-1A family.

In terms of biological role, seems to be required for maximal rate of protein biosynthesis. Enhances ribosome dissociation into subunits and stabilizes the binding of the initiator Met-tRNA(I) to 40 S ribosomal subunits. In Picrophilus torridus (strain ATCC 700027 / DSM 9790 / JCM 10055 / NBRC 100828 / KAW 2/3), this protein is Translation initiation factor 1A.